We begin with the raw amino-acid sequence, 443 residues long: Chromosome partition protein MukF (443 aa).

The leucine-zipper stretch occupies residues 209 to 237 (LDETSINLRELQDTLNAAGDKLQSQLLRI).

Belongs to the MukF family. As to quaternary structure, interacts, and probably forms a ternary complex, with MukE and MukB via its C-terminal region. The complex formation is stimulated by calcium or magnesium. It is required for an interaction between MukE and MukB.

It localises to the cytoplasm. It is found in the nucleoid. In terms of biological role, involved in chromosome condensation, segregation and cell cycle progression. May participate in facilitating chromosome segregation by condensation DNA from both sides of a centrally located replisome during cell division. Not required for mini-F plasmid partitioning. Probably acts via its interaction with MukB and MukE. Overexpression results in anucleate cells. It has a calcium binding activity. The protein is Chromosome partition protein MukF of Haemophilus ducreyi (strain 35000HP / ATCC 700724).